The following is a 488-amino-acid chain: Histone deacetylase 2 (488 aa).

The tract at residues 9 to 322 (KKKVCYYYDG…WTYETAVALD (314 aa)) is histone deacetylase. Positions 28 and 32 each coordinate 1D-myo-inositol 1,4,5,6-tetrakisphosphate. Lys-75 carries the post-translational modification N6-acetyllysine; alternate. Residue Lys-75 forms a Glycyl lysine isopeptide (Lys-Gly) (interchain with G-Cter in SUMO2); alternate linkage. The active site involves His-142. Positions 175, 177, 179, 188, 191, 194, 198, and 199 each coordinate Ca(2+). Zn(2+) is bound by residues Asp-177 and His-179. Lys-221 is subject to N6-acetyllysine. Tyr-223 contributes to the Ca(2+) binding site. S-nitrosocysteine is present on Cys-262. Asp-265 contributes to the Zn(2+) binding site. A 1D-myo-inositol 1,4,5,6-tetrakisphosphate-binding site is contributed by Arg-271. Cys-274 carries the S-nitrosocysteine modification. Residues 389 to 488 (AVHEDSGDED…GAKSEQLSNP (100 aa)) are disordered. 4 positions are modified to phosphoserine: Ser-394, Ser-407, Ser-422, and Ser-424. Positions 402-417 (PDKRISIRASDKRIAC) are enriched in basic and acidic residues. The span at 418 to 428 (DEEFSDSEDEG) shows a compositional bias: acidic residues. The span at 429–481 (EGGRRNVADHKKGAKKARIEEDKKETEDKKTDVKEEDKSKDNSGEKTDPKGAK) shows a compositional bias: basic and acidic residues. Residues Lys-439, Lys-452, Lys-458, Lys-462, Lys-478, and Lys-481 each participate in a glycyl lysine isopeptide (Lys-Gly) (interchain with G-Cter in SUMO2) cross-link.

The protein belongs to the histone deacetylase family. HD type 1 subfamily. In terms of assembly, part of the core histone deacetylase (HDAC) complex composed of HDAC1, HDAC2, RBBP4 and RBBP7, the core complex associates with SIN3, SAP18 and SAP30 to form the SIN3 HDAC complex. Component of the nucleosome remodeling and deacetylase (NuRD) repressor complex, composed of core proteins MTA1, MTA2, MTA3, RBBP4, RBBP7, HDAC1, HDAC2, MBD2, MBD3, and peripherally associated proteins CDK2AP1, CDK2AP2, GATAD2A, GATAD2B, CHD3, CHD4 and CHD5. The exact stoichiometry of the NuRD complex is unknown, and some subunits such as MBD2 and MBD3, GATAD2A and GATAD2B, and CHD3, CHD4 and CHD5 define mutually exclusive NuRD complexes. Component of a RCOR/GFI/KDM1A/HDAC complex. Component of a BHC histone deacetylase complex that contains HDAC1, HDAC2, HMG20B, KDM1A, RCOR1 and PHF21A. The BHC complex may also contain ZMYM2, ZNF217, ZMYM3, GSE1 and GTF2I. Part of a complex containing the core histones H2A, H2B, H3 and H4, DEK and unphosphorylated DAXX. Part of a complex containing ATR and CHD4. Forms a heterologous complex at least with YY1. Interacts in the late S-phase of DNA-replication with DNMT1 in the other transcriptional repressor complex composed of DNMT1, DMAP1, PCNA, CAF1. Component of a mSin3A corepressor complex that contains SIN3A, SAP130, SUDS3, ARID4B, HDAC1 and HDAC2. Part of a complex composed of TRIM28, HDAC1, HDAC2 and EHMT2. Part of a complex containing at least CDYL, MIER1, MIER2, HDAC1 and HDAC2. Component of a histone deacetylase complex containing DNTTIP1, ZNF541, HDAC1 and HDAC2. Forms a complex comprising APPL1, RUVBL2, APPL2, CTNNB1 and HDAC1. Interacts directly with GFI1. Interacts directly with GFI1B. Interacts with APEX1; the interaction is not dependent on the acetylated status of APEX1. Interacts with ATR. Interacts with BCL6 (non-acetylated form). Interacts with BEND3. Interacts with CBFA2T3. Interacts with CDK2AP1. Interacts with CHD4. Interacts with CHD5. Interacts with CHFR. Interacts with CRY1. Interacts with DNMT1. Interacts with GATAD2A. Interacts with HCFC1. Interacts with HDAC7. Interacts with HDAC10. Interacts with INSM1. Interacts with KDM4A. Interacts with MACROH2A1 (via the non-histone region). Interacts with MBD3L2. Interacts with MTA1, with a preference for sumoylated MTA1. Interacts with NACC2. Interacts with NRIP1. Interacts with PELP1. Interacts with PIMREG. Interacts with PRDM6. Interacts with PWWP2B Interacts with SAP30. Interacts with SAP30L. Interacts with SETDB1. Interacts with SIX3. Interacts with SMARCAD1. Interacts with SNW1. Interacts with SPHK2. Interacts with SPEN/MINT. Interacts (CK2 phosphorylated form) with SP3. Interacts with SUV39H1. Interacts with TSHZ3 (via its N-terminus). Interacts with ZMYND8. Interacts with ZNF431. Interacts with ZNF263; recruited to the SIX3 promoter along with other proteins involved in chromatin modification and transcriptional corepression where it contributes to transcriptional repression. Identified in a complex with HDAC1, KCTD19, DNTTIP1 and ZNF541. Component of the SIN3B complex, which includes SIN3B, HDAC2, PHF12 and MORF4L1; interacts directly with all subunits. It depends on Zn(2+) as a cofactor. Ca(2+) is required as a cofactor. S-nitrosylated by GAPDH. In neurons, S-nitrosylation at Cys-262 and Cys-274 does not affect enzyme activity, but induces HDAC2 release from chromatin. This in turn increases acetylation of histones surrounding neurotrophin-dependent gene promoters and promotes their transcription. In embryonic cortical neurons, S-Nitrosylation regulates dendritic growth and branching.

Its subcellular location is the nucleus. The protein resides in the cytoplasm. It carries out the reaction N(6)-acetyl-L-lysyl-[histone] + H2O = L-lysyl-[histone] + acetate. The enzyme catalyses N(6)-acetyl-L-lysyl-[protein] + H2O = L-lysyl-[protein] + acetate. It catalyses the reaction N(6)-(2E)-butenoyl-L-lysyl-[protein] + H2O = (2E)-2-butenoate + L-lysyl-[protein]. The catalysed reaction is N(6)-(2-hydroxyisobutanoyl)-L-lysyl-[protein] + H2O = 2-hydroxy-2-methylpropanoate + L-lysyl-[protein]. It carries out the reaction N(6)-[(S)-lactoyl]-L-lysyl-[protein] + H2O = (S)-lactate + L-lysyl-[protein]. Inositol tetraphosphate (1D-myo-inositol 1,4,5,6-tetrakisphosphate) may act as an intermolecular glue between HDAC2 and N-Cor repressor complex components. In terms of biological role, histone deacetylase that catalyzes the deacetylation of lysine residues on the N-terminal part of the core histones (H2A, H2B, H3 and H4). Histone deacetylation gives a tag for epigenetic repression and plays an important role in transcriptional regulation, cell cycle progression and developmental events. Histone deacetylases act via the formation of large multiprotein complexes. Forms transcriptional repressor complexes by associating with MAD, SIN3, YY1 and N-COR. Component of a RCOR/GFI/KDM1A/HDAC complex that suppresses, via histone deacetylase (HDAC) recruitment, a number of genes implicated in multilineage blood cell development. Acts as a component of the histone deacetylase NuRD complex which participates in the remodeling of chromatin. Component of the SIN3B complex that represses transcription and counteracts the histone acetyltransferase activity of EP300 through the recognition H3K27ac marks by PHF12 and the activity of the histone deacetylase HDAC2. Also deacetylates non-histone targets: deacetylates TSHZ3, thereby regulating its transcriptional repressor activity. May be involved in the transcriptional repression of circadian target genes, such as PER1, mediated by CRY1 through histone deacetylation. Involved in MTA1-mediated transcriptional corepression of TFF1 and CDKN1A. In addition to protein deacetylase activity, also acts as a protein-lysine deacylase by recognizing other acyl groups: catalyzes removal of (2E)-butenoyl (crotonyl), lactoyl (lactyl) and 2-hydroxyisobutanoyl (2-hydroxyisobutyryl) acyl groups from lysine residues, leading to protein decrotonylation, delactylation and de-2-hydroxyisobutyrylation, respectively. The sequence is that of Histone deacetylase 2 from Mus musculus (Mouse).